The following is a 383-amino-acid chain: Queuine tRNA-ribosyltransferase (383 aa).

The active-site Proton acceptor is the Asp-90. Residues 90–94 (DSGGF), Asp-144, Gln-193, and Gly-227 each bind substrate. Residues 258 to 264 (GVGTPED) are RNA binding. Residue Asp-277 is the Nucleophile of the active site. The segment at 282 to 286 (TRNAR) is RNA binding; important for wobble base 34 recognition. Residues Cys-315, Cys-317, Cys-320, and His-346 each contribute to the Zn(2+) site.

It belongs to the queuine tRNA-ribosyltransferase family. Homodimer. Within each dimer, one monomer is responsible for RNA recognition and catalysis, while the other monomer binds to the replacement base PreQ1. It depends on Zn(2+) as a cofactor.

The catalysed reaction is 7-aminomethyl-7-carbaguanine + guanosine(34) in tRNA = 7-aminomethyl-7-carbaguanosine(34) in tRNA + guanine. The protein operates within tRNA modification; tRNA-queuosine biosynthesis. Its function is as follows. Catalyzes the base-exchange of a guanine (G) residue with the queuine precursor 7-aminomethyl-7-deazaguanine (PreQ1) at position 34 (anticodon wobble position) in tRNAs with GU(N) anticodons (tRNA-Asp, -Asn, -His and -Tyr). Catalysis occurs through a double-displacement mechanism. The nucleophile active site attacks the C1' of nucleotide 34 to detach the guanine base from the RNA, forming a covalent enzyme-RNA intermediate. The proton acceptor active site deprotonates the incoming PreQ1, allowing a nucleophilic attack on the C1' of the ribose to form the product. After dissociation, two additional enzymatic reactions on the tRNA convert PreQ1 to queuine (Q), resulting in the hypermodified nucleoside queuosine (7-(((4,5-cis-dihydroxy-2-cyclopenten-1-yl)amino)methyl)-7-deazaguanosine). This chain is Queuine tRNA-ribosyltransferase, found in Ralstonia pickettii (strain 12J).